Reading from the N-terminus, the 101-residue chain is Protein RnfH (101 aa).

It belongs to the UPF0125 (RnfH) family.

This Coxiella burnetii (strain CbuK_Q154) (Coxiella burnetii (strain Q154)) protein is Protein RnfH.